Reading from the N-terminus, the 176-residue chain is Ribosome rescue factor SmrB (176 aa).

Residues 93–168 (LDLHGYRQSE…GDAALLVLID (76 aa)) enclose the Smr domain.

The protein belongs to the SmrB family. As to quaternary structure, associates with collided ribosomes, but not with correctly translating polysomes.

Functionally, acts as a ribosome collision sensor. Detects stalled/collided disomes (pairs of ribosomes where the leading ribosome is stalled and a second ribosome has collided with it) and endonucleolytically cleaves mRNA at the 5' boundary of the stalled ribosome. Stalled/collided disomes form a new interface (primarily via the 30S subunits) that binds SmrB. Cleaved mRNA becomes available for tmRNA ligation, leading to ribosomal subunit dissociation and rescue of stalled ribosomes. The polypeptide is Ribosome rescue factor SmrB (Shewanella sp. (strain MR-4)).